Consider the following 134-residue polypeptide: MDTSHAIKSCVLILLVTLLCAERAQGLECYQCYGVPFETSCPSFTCPYPDGFCVAQEEEFIANSQRKKVKSRSCHPFCPDEIEKKFILDPNTKMNISCCQEDLCNAAVPTGGSSWTTAGVLLFSLGSVLLQTLM.

The signal sequence occupies residues 1–21 (MDTSHAIKSCVLILLVTLLCA). Residues 27-105 (LECYQCYGVP…ISCCQEDLCN (79 aa)) form the UPAR/Ly6 domain. Intrachain disulfides connect cysteine 29–cysteine 53, cysteine 32–cysteine 41, cysteine 46–cysteine 74, cysteine 78–cysteine 98, and cysteine 99–cysteine 104. N-linked (GlcNAc...) asparagine glycosylation is present at asparagine 95. Residue glycine 112 is the site of GPI-anchor amidated glycine attachment. Residues 113–134 (SSWTTAGVLLFSLGSVLLQTLM) constitute a propeptide, removed in mature form.

As to expression, expressed in hematopoietic tissue (spleen, thymus, bone marrow). Also found in peritoneal macrophages, peripheral blood leukocytes, liver, heart, brain, kidney and lung.

Its subcellular location is the cell membrane. The sequence is that of Lymphocyte antigen 6I (Ly6i) from Mus musculus (Mouse).